Here is a 330-residue protein sequence, read N- to C-terminus: Phosphate acyltransferase (330 aa).

It belongs to the PlsX family. In terms of assembly, homodimer. Probably interacts with PlsY.

The protein localises to the cytoplasm. The catalysed reaction is a fatty acyl-[ACP] + phosphate = an acyl phosphate + holo-[ACP]. Its pathway is lipid metabolism; phospholipid metabolism. In terms of biological role, catalyzes the reversible formation of acyl-phosphate (acyl-PO(4)) from acyl-[acyl-carrier-protein] (acyl-ACP). This enzyme utilizes acyl-ACP as fatty acyl donor, but not acyl-CoA. The protein is Phosphate acyltransferase of Streptococcus pneumoniae (strain 70585).